The primary structure comprises 680 residues: 1-deoxy-D-xylulose-5-phosphate synthase (680 aa).

The span at 1–17 shows a compositional bias: low complexity; it reads MQQSPHSPQSQSLSASA. Positions 1 to 20 are disordered; it reads MQQSPHSPQSQSLSASAVDS. Residues histidine 113 and 154 to 156 contribute to the thiamine diphosphate site; that span reads GHS. Aspartate 185 lines the Mg(2+) pocket. Thiamine diphosphate contacts are provided by residues 186 to 187, asparagine 214, phenylalanine 323, and glutamate 408; that span reads GA. Asparagine 214 lines the Mg(2+) pocket.

The protein belongs to the transketolase family. DXPS subfamily. Homodimer. Mg(2+) serves as cofactor. Requires thiamine diphosphate as cofactor.

It carries out the reaction D-glyceraldehyde 3-phosphate + pyruvate + H(+) = 1-deoxy-D-xylulose 5-phosphate + CO2. It participates in metabolic intermediate biosynthesis; 1-deoxy-D-xylulose 5-phosphate biosynthesis; 1-deoxy-D-xylulose 5-phosphate from D-glyceraldehyde 3-phosphate and pyruvate: step 1/1. Functionally, catalyzes the acyloin condensation reaction between C atoms 2 and 3 of pyruvate and glyceraldehyde 3-phosphate to yield 1-deoxy-D-xylulose-5-phosphate (DXP). The sequence is that of 1-deoxy-D-xylulose-5-phosphate synthase from Psychrobacter cryohalolentis (strain ATCC BAA-1226 / DSM 17306 / VKM B-2378 / K5).